A 175-amino-acid polypeptide reads, in one-letter code: Large ribosomal subunit protein uL10 (175 aa).

This sequence belongs to the universal ribosomal protein uL10 family. Part of the ribosomal stalk of the 50S ribosomal subunit. The N-terminus interacts with L11 and the large rRNA to form the base of the stalk. The C-terminus forms an elongated spine to which L12 dimers bind in a sequential fashion forming a multimeric L10(L12)X complex.

In terms of biological role, forms part of the ribosomal stalk, playing a central role in the interaction of the ribosome with GTP-bound translation factors. The protein is Large ribosomal subunit protein uL10 of Delftia acidovorans (strain DSM 14801 / SPH-1).